Here is a 114-residue protein sequence, read N- to C-terminus: Cholecystokinin (114 aa).

An N-terminal signal peptide occupies residues 1–20; sequence MNGGLCLCVLMAVLAAGTLA. The residue at position 96 (tyrosine 96) is a Sulfotyrosine. The residue at position 102 (phenylalanine 102) is a Phenylalanine amide. A propeptide spanning residues 106–114 is cleaved from the precursor; that stretch reads SAEEYEYTS. A sulfotyrosine mark is found at tyrosine 110 and tyrosine 112.

The protein belongs to the gastrin/cholecystokinin family. In terms of assembly, binds to CCK-A receptors in the pancreas and CCK-B receptors in the brain. Post-translationally, the precursor is cleaved by proteases to produce a number of active cholecystokinins. Brain contains CCK-octapeptide (CCK8) and several CCK-desoctapeptides; whereas pig gut contains intact CCK33, CCK39, and CCK58 as well as CCK-octapeptide and the CCK-desoctapeptides. Distribution differences are due to tissue-specific post-translational processing events. In terms of processing, the precursor is cleaved by ACE, which removes the Gly-Arg-Arg peptide at the C-terminus, leading to mature hormone. In terms of tissue distribution, synthesized in both cerebral cortex and duodenal mucosa.

It localises to the secreted. Functionally, this peptide hormone induces gall bladder contraction and the release of pancreatic enzymes in the gut. Its function in the brain is not clear. Binding to CCK-A receptors stimulates amylase release from the pancreas, binding to CCK-B receptors stimulates gastric acid secretion. This Sus scrofa (Pig) protein is Cholecystokinin (CCK).